Here is a 571-residue protein sequence, read N- to C-terminus: External alternative NAD(P)H-ubiquinone oxidoreductase B1, mitochondrial (571 aa).

A mitochondrion-targeting transit peptide spans 1–35 (MTLLSSLGRASRSAPLASKLLLLGTLSGGSIVAYA). Position 51 to 81 (51 to 81 (KVVVLGTGWAGISFLKDLDITSYDVQVVSPQ)) interacts with FAD. 215-251 (LHFVIVGGGPTGVEFAAELHDFIIEDITKIYPSVKEL) serves as a coordination point for NAD(+). Residues 372-407 (KILGDIANIFKAADADNSGTLTMEELEGVVDDIIVR) enclose the EF-hand domain. Ca(2+) is bound by residues D385, D387, S389, T391, and E396. Residues 562-571 (YIFGRDSSRI) carry the Microbody targeting signal motif.

This sequence belongs to the NADH dehydrogenase family. The cofactor is FAD. Expressed in seedlings, roots, cotyledons, leaves, stems, buds and flowers.

It is found in the mitochondrion inner membrane. It localises to the peroxisome. The enzyme catalyses a quinone + NADH + H(+) = a quinol + NAD(+). It catalyses the reaction a ubiquinone + NADH + H(+) = a ubiquinol + NAD(+). Activity is calcium-dependent with a more pronounced effect at higher pH. Alternative NADH-ubiquinone oxidoreductase which catalyzes the oxidation of mitochondrial NADH does not translocate protons across the inner mitochondrial membrane. Calcium-dependent NAD(P)H dehydrogenase. Binds calcium ions. This chain is External alternative NAD(P)H-ubiquinone oxidoreductase B1, mitochondrial (NDB1), found in Arabidopsis thaliana (Mouse-ear cress).